The following is a 386-amino-acid chain: MASHSSTLLSSPTFAPFSSHRLHYSPNPSTLRFSRPIRNKPNLALRCSVSIEKEVPETERPFTFLRDSDDVTPSSSSSSVRARFETMIRAAQDSVCDAIEAIEGGPKFKEDVWSRPGGGGGISRVLQDGNVFEKAGVNVSVVYGVMPPEAYRAAKGSASDQKPGPVPFFAAGVSSVLHPKNPFAPTLHFNYRYFETDAPKDVPGAPRQWWFGGGTDFTPAYIFEEDVKHFHSIQKQACDKFDPSFYPRFKKWCDDYFYIKHRDERRGLGGIFFDDLNDYDQEMLLSFATECANSVVPAYIPIVEKRKDMEFTEQHKAWQQLRRGRYVEFNLVYDRGTTFGLKTGGRIESILVSLPLSARWEYDHKPEEGTEEWKLLDACINPKEWI.

The transit peptide at 1-48 (MASHSSTLLSSPTFAPFSSHRLHYSPNPSTLRFSRPIRNKPNLALRCS) directs the protein to the chloroplast. The important for dimerization stretch occupies residues 125 to 134 (VLQDGNVFEK). S174 contacts substrate. The active-site Proton donor is H188. Substrate-binding positions include 190–192 (NYR) and 344–349 (GGRIES). The important for dimerization stretch occupies residues 326–361 (YVEFNLVYDRGTTFGLKTGGRIESILVSLPLSARWE).

It belongs to the aerobic coproporphyrinogen-III oxidase family. In terms of assembly, homodimer. As to expression, expressed in cotyledons, leaves and roots.

It localises to the plastid. Its subcellular location is the chloroplast. The enzyme catalyses coproporphyrinogen III + O2 + 2 H(+) = protoporphyrinogen IX + 2 CO2 + 2 H2O. It functions in the pathway porphyrin-containing compound metabolism; protoporphyrin-IX biosynthesis; protoporphyrinogen-IX from coproporphyrinogen-III (O2 route): step 1/1. It participates in porphyrin-containing compound metabolism; chlorophyll biosynthesis. In terms of biological role, key enzyme in heme biosynthesis. Catalyzes the oxidative decarboxylation of propionic acid side chains of rings A and B of coproporphyrinogen III. This is Coproporphyrinogen-III oxidase 1, chloroplastic (CPX1) from Arabidopsis thaliana (Mouse-ear cress).